Consider the following 76-residue polypeptide: Putative UPF0377 protein YGL260W (76 aa).

Belongs to the UPF0377 family.

The protein is Putative UPF0377 protein YGL260W of Saccharomyces cerevisiae (strain ATCC 204508 / S288c) (Baker's yeast).